Reading from the N-terminus, the 76-residue chain is Tautomerase PptA (76 aa).

P2 serves as the catalytic Proton acceptor; via imino nitrogen.

Belongs to the 4-oxalocrotonate tautomerase family. PptA subfamily. Homodimer.

It localises to the cytoplasm. This chain is Tautomerase PptA, found in Enterobacter sp. (strain 638).